A 391-amino-acid polypeptide reads, in one-letter code: Chaperone protein HtpG (391 aa).

The protein belongs to the heat shock protein 90 family. As to quaternary structure, homodimer.

Its subcellular location is the cytoplasm. Functionally, molecular chaperone. Has ATPase activity. The sequence is that of Chaperone protein HtpG (htpG) from Aliivibrio fischeri (Vibrio fischeri).